The sequence spans 61 residues: Insect toxin LqhIT5 (61 aa).

Residues 1–61 enclose the LCN-type CS-alpha/beta domain; sequence DGYIRGGDGC…EWKYETNTCG (61 aa). 4 disulfides stabilise this stretch: Cys-10-Cys-60, Cys-14-Cys-35, Cys-21-Cys-42, and Cys-25-Cys-44.

This sequence belongs to the long (4 C-C) scorpion toxin superfamily. Sodium channel inhibitor family. Beta subfamily. As to expression, expressed by the venom gland.

The protein resides in the secreted. In terms of biological role, excitatory insect beta-toxins induce a spastic paralysis. They bind voltage-independently at site-4 of sodium channels (Nav) and shift the voltage of activation toward more negative potentials thereby affecting sodium channel activation and promoting spontaneous and repetitive firing. This toxin is active only on insects. It operates by inducing a fast contraction paralysis without depressant activity. It is more similar to the excitatory toxins in its mode of action and the depressant toxins in its primary structure. This Leiurus hebraeus (Hebrew deathstalker scorpion) protein is Insect toxin LqhIT5.